The chain runs to 418 residues: Serine hydroxymethyltransferase (418 aa).

Residues L121 and 125–127 contribute to the (6S)-5,6,7,8-tetrahydrofolate site; that span reads GHL. Residue K230 is modified to N6-(pyridoxal phosphate)lysine. 356 to 358 is a binding site for (6S)-5,6,7,8-tetrahydrofolate; that stretch reads SPF.

The protein belongs to the SHMT family. Homodimer. It depends on pyridoxal 5'-phosphate as a cofactor.

Its subcellular location is the cytoplasm. It catalyses the reaction (6R)-5,10-methylene-5,6,7,8-tetrahydrofolate + glycine + H2O = (6S)-5,6,7,8-tetrahydrofolate + L-serine. Its pathway is one-carbon metabolism; tetrahydrofolate interconversion. It participates in amino-acid biosynthesis; glycine biosynthesis; glycine from L-serine: step 1/1. Its function is as follows. Catalyzes the reversible interconversion of serine and glycine with tetrahydrofolate (THF) serving as the one-carbon carrier. This reaction serves as the major source of one-carbon groups required for the biosynthesis of purines, thymidylate, methionine, and other important biomolecules. Also exhibits THF-independent aldolase activity toward beta-hydroxyamino acids, producing glycine and aldehydes, via a retro-aldol mechanism. The polypeptide is Serine hydroxymethyltransferase (Idiomarina loihiensis (strain ATCC BAA-735 / DSM 15497 / L2-TR)).